Here is a 430-residue protein sequence, read N- to C-terminus: Glutamyl-tRNA reductase (430 aa).

Substrate is bound by residues 49-52, Ser-109, 114-116, and Gln-120; these read TCNR and EGQ. The Nucleophile role is filled by Cys-50. Residue 189 to 194 coordinates NADP(+); the sequence is GAGKMA.

This sequence belongs to the glutamyl-tRNA reductase family. As to quaternary structure, homodimer.

It catalyses the reaction (S)-4-amino-5-oxopentanoate + tRNA(Glu) + NADP(+) = L-glutamyl-tRNA(Glu) + NADPH + H(+). The protein operates within porphyrin-containing compound metabolism; protoporphyrin-IX biosynthesis; 5-aminolevulinate from L-glutamyl-tRNA(Glu): step 1/2. It functions in the pathway porphyrin-containing compound metabolism; chlorophyll biosynthesis. Functionally, catalyzes the NADPH-dependent reduction of glutamyl-tRNA(Glu) to glutamate 1-semialdehyde (GSA). This is Glutamyl-tRNA reductase from Crocosphaera subtropica (strain ATCC 51142 / BH68) (Cyanothece sp. (strain ATCC 51142)).